A 161-amino-acid chain; its full sequence is tRNA-specific adenosine deaminase (161 aa).

A CMP/dCMP-type deaminase domain is found at 2 to 120 (TQDELYMKEA…GTLMNLLQEE (119 aa)). His-53 is a Zn(2+) binding site. The active-site Proton donor is Glu-55. Residues Cys-83 and Cys-86 each coordinate Zn(2+).

This sequence belongs to the cytidine and deoxycytidylate deaminase family. As to quaternary structure, homodimer. Zn(2+) is required as a cofactor.

It catalyses the reaction adenosine(34) in tRNA + H2O + H(+) = inosine(34) in tRNA + NH4(+). Its function is as follows. Catalyzes the deamination of adenosine to inosine at the wobble position 34 of tRNA(Arg2). In Bacillus subtilis (strain 168), this protein is tRNA-specific adenosine deaminase.